Here is a 156-residue protein sequence, read N- to C-terminus: Small ribosomal subunit protein uS7 (156 aa).

It belongs to the universal ribosomal protein uS7 family. In terms of assembly, part of the 30S ribosomal subunit. Contacts proteins S9 and S11.

Functionally, one of the primary rRNA binding proteins, it binds directly to 16S rRNA where it nucleates assembly of the head domain of the 30S subunit. Is located at the subunit interface close to the decoding center, probably blocks exit of the E-site tRNA. In Baumannia cicadellinicola subsp. Homalodisca coagulata, this protein is Small ribosomal subunit protein uS7.